The primary structure comprises 613 residues: Dihydroxy-acid dehydratase (613 aa).

Aspartate 81 lines the Mg(2+) pocket. [2Fe-2S] cluster is bound at residue cysteine 122. Mg(2+) is bound by residues aspartate 123 and lysine 124. Lysine 124 carries the N6-carboxylysine modification. Position 195 (cysteine 195) interacts with [2Fe-2S] cluster. Position 491 (glutamate 491) interacts with Mg(2+). The active-site Proton acceptor is serine 517.

This sequence belongs to the IlvD/Edd family. As to quaternary structure, homodimer. Requires [2Fe-2S] cluster as cofactor. Mg(2+) is required as a cofactor.

It catalyses the reaction (2R)-2,3-dihydroxy-3-methylbutanoate = 3-methyl-2-oxobutanoate + H2O. The catalysed reaction is (2R,3R)-2,3-dihydroxy-3-methylpentanoate = (S)-3-methyl-2-oxopentanoate + H2O. It functions in the pathway amino-acid biosynthesis; L-isoleucine biosynthesis; L-isoleucine from 2-oxobutanoate: step 3/4. Its pathway is amino-acid biosynthesis; L-valine biosynthesis; L-valine from pyruvate: step 3/4. Functions in the biosynthesis of branched-chain amino acids. Catalyzes the dehydration of (2R,3R)-2,3-dihydroxy-3-methylpentanoate (2,3-dihydroxy-3-methylvalerate) into 2-oxo-3-methylpentanoate (2-oxo-3-methylvalerate) and of (2R)-2,3-dihydroxy-3-methylbutanoate (2,3-dihydroxyisovalerate) into 2-oxo-3-methylbutanoate (2-oxoisovalerate), the penultimate precursor to L-isoleucine and L-valine, respectively. This is Dihydroxy-acid dehydratase from Vibrio cholerae serotype O1 (strain ATCC 39541 / Classical Ogawa 395 / O395).